The sequence spans 606 residues: Aspartate--tRNA(Asp/Asn) ligase (606 aa).

Residue E175 participates in L-aspartate binding. Residues 199–202 (QLFK) are aspartate. R221 contacts L-aspartate. ATP is bound by residues 221–223 (RDE) and Q230. H453 provides a ligand contact to L-aspartate. An ATP-binding site is contributed by E487. R494 contributes to the L-aspartate binding site. 539 to 542 (GWDR) serves as a coordination point for ATP. The segment at 564–606 (GGVDPLTDAPGTIPAEQRKETGVDFKPEKAAKAAQGEKAGKES) is disordered. The segment covering 579–594 (EQRKETGVDFKPEKAA) has biased composition (basic and acidic residues).

It belongs to the class-II aminoacyl-tRNA synthetase family. Type 1 subfamily. Homodimer.

The protein localises to the cytoplasm. The catalysed reaction is tRNA(Asx) + L-aspartate + ATP = L-aspartyl-tRNA(Asx) + AMP + diphosphate. Functionally, aspartyl-tRNA synthetase with relaxed tRNA specificity since it is able to aspartylate not only its cognate tRNA(Asp) but also tRNA(Asn). Reaction proceeds in two steps: L-aspartate is first activated by ATP to form Asp-AMP and then transferred to the acceptor end of tRNA(Asp/Asn). This is Aspartate--tRNA(Asp/Asn) ligase from Corynebacterium aurimucosum (strain ATCC 700975 / DSM 44827 / CIP 107346 / CN-1) (Corynebacterium nigricans).